The following is a 330-amino-acid chain: Phosphate acyltransferase (330 aa).

It belongs to the PlsX family. In terms of assembly, homodimer. Probably interacts with PlsY.

Its subcellular location is the cytoplasm. The catalysed reaction is a fatty acyl-[ACP] + phosphate = an acyl phosphate + holo-[ACP]. It functions in the pathway lipid metabolism; phospholipid metabolism. Its function is as follows. Catalyzes the reversible formation of acyl-phosphate (acyl-PO(4)) from acyl-[acyl-carrier-protein] (acyl-ACP). This enzyme utilizes acyl-ACP as fatty acyl donor, but not acyl-CoA. The protein is Phosphate acyltransferase of Bacillus cytotoxicus (strain DSM 22905 / CIP 110041 / 391-98 / NVH 391-98).